Here is a 601-residue protein sequence, read N- to C-terminus: Elongation factor 4 (601 aa).

One can recognise a tr-type G domain in the interval 6–188 (AHIRNFSIIA…QIVRKVPPPK (183 aa)). Residues 18–23 (DHGKST) and 135–138 (NKVD) contribute to the GTP site.

Belongs to the TRAFAC class translation factor GTPase superfamily. Classic translation factor GTPase family. LepA subfamily.

It localises to the cell inner membrane. The catalysed reaction is GTP + H2O = GDP + phosphate + H(+). Its function is as follows. Required for accurate and efficient protein synthesis under certain stress conditions. May act as a fidelity factor of the translation reaction, by catalyzing a one-codon backward translocation of tRNAs on improperly translocated ribosomes. Back-translocation proceeds from a post-translocation (POST) complex to a pre-translocation (PRE) complex, thus giving elongation factor G a second chance to translocate the tRNAs correctly. Binds to ribosomes in a GTP-dependent manner. This is Elongation factor 4 from Anaeromyxobacter sp. (strain Fw109-5).